A 516-amino-acid polypeptide reads, in one-letter code: Probable D,D-dipeptide-binding periplasmic protein DdpA (516 aa).

The first 25 residues, 1–25 (MKRSISFRPTLLALVLATNFPVAHA), serve as a signal peptide directing secretion.

Belongs to the bacterial solute-binding protein 5 family. In terms of assembly, the complex is composed of two ATP-binding proteins (DdpD and DdpF), two transmembrane proteins (DdpB and DdpC) and a solute-binding protein (DdpA).

The protein localises to the periplasm. Functionally, part of the ABC transporter complex DdpABCDF, which is probably involved in D,D-dipeptide transport. This Escherichia coli (strain K12) protein is Probable D,D-dipeptide-binding periplasmic protein DdpA (ddpA).